The following is a 295-amino-acid chain: RNA polymerase sigma factor RpoH (295 aa).

Residues 52 to 121 (MVTSHLRLVA…IQEYILRSWS (70 aa)) form a sigma-70 factor domain-2 region. The short motif at 76-79 (EVIS) is the Interaction with polymerase core subunit RpoC element. Residues 230 to 281 (AMVELTDRERHILTERRLKDDPTTLEELAAQYGVSRERVRQIEVRAFEKLQK) are sigma-70 factor domain-4. A DNA-binding region (H-T-H motif) is located at residues 254–273 (LEELAAQYGVSRERVRQIEV).

It belongs to the sigma-70 factor family. RpoH subfamily. In terms of assembly, interacts with the RNA polymerase core enzyme.

Its subcellular location is the cytoplasm. Sigma factors are initiation factors that promote the attachment of RNA polymerase to specific initiation sites and are then released. This sigma factor is involved in regulation of expression of heat shock genes. This Caulobacter vibrioides (strain ATCC 19089 / CIP 103742 / CB 15) (Caulobacter crescentus) protein is RNA polymerase sigma factor RpoH.